A 444-amino-acid polypeptide reads, in one-letter code: MTLDLSKPATAGYLSGFANEFATEALPGALPHGRNSPQRAPYGLYAEQLSGTAFTAPRGHNRRSWLYRIRPAAVHRPFEPYAGAQRLVSEFGDSADVPPTPPNQLRWDPLPMPVEPTDFVDGLVTMAGNGSAAAMNGCAIHLYAANRSMQDRFFYSADGELLIVPQQGRLFIATEFGRLDVEPFEIAVIPRGVRFAVALPDGDARGYICENFGALLRLPDLGPIGSNGLANPRDFLTPQAAYEDREGAFELIAKLNGRLWRADIGHSPLDVVAWHGNYAPYKYDLRLFNTIGSISFDHPDPSIFLVLQAQSDTPGVDTIDFVIFPPRWLAAEDTFRPPWFHRNVASEFMGLVHGAYDAKAEGFVPGGASLHNCMSGHRPDADTFEKASVSDTTKPHKVDATMAFMFETRTLIRPTRYALDTAQLQADYFECWQGIKKHFNPEQR.

His298 acts as the Proton acceptor in catalysis. His341 and Glu347 together coordinate Fe cation. 2 residues coordinate homogentisate: Tyr356 and His377. His377 contributes to the Fe cation binding site.

It belongs to the homogentisate dioxygenase family. As to quaternary structure, hexamer; dimer of trimers. The cofactor is Fe cation.

The enzyme catalyses homogentisate + O2 = 4-maleylacetoacetate + H(+). It participates in amino-acid degradation; L-phenylalanine degradation; acetoacetate and fumarate from L-phenylalanine: step 4/6. In terms of biological role, involved in the catabolism of homogentisate (2,5-dihydroxyphenylacetate or 2,5-OH-PhAc), a central intermediate in the degradation of phenylalanine and tyrosine. Catalyzes the oxidative ring cleavage of the aromatic ring of homogentisate to yield maleylacetoacetate. The protein is Homogentisate 1,2-dioxygenase of Burkholderia cenocepacia (strain ATCC BAA-245 / DSM 16553 / LMG 16656 / NCTC 13227 / J2315 / CF5610) (Burkholderia cepacia (strain J2315)).